A 200-amino-acid chain; its full sequence is GTP cyclohydrolase 1 (200 aa).

Zn(2+) is bound by residues C87, H90, and C158.

This sequence belongs to the GTP cyclohydrolase I family. In terms of assembly, toroid-shaped homodecamer, composed of two pentamers of five dimers.

It catalyses the reaction GTP + H2O = 7,8-dihydroneopterin 3'-triphosphate + formate + H(+). The protein operates within cofactor biosynthesis; 7,8-dihydroneopterin triphosphate biosynthesis; 7,8-dihydroneopterin triphosphate from GTP: step 1/1. The sequence is that of GTP cyclohydrolase 1 from Xanthomonas axonopodis pv. citri (strain 306).